We begin with the raw amino-acid sequence, 359 residues long: NAC transcription factor 47 (359 aa).

Residues 10-186 (LPPGFRFHPT…DWVLCRIYKK (177 aa)) enclose the NAC domain. The DNA-binding element occupies 112–192 (IGIKKALVFY…IYKKSHASLS (81 aa)). Disordered regions lie at residues 147–166 (KRIN…FGDR) and 200–226 (TSNQ…LQND). Over residues 148–165 (RINSSRSGGSEVNNNFGD) the composition is skewed to polar residues.

It is found in the nucleus. In terms of biological role, transcription factor that binds to the promoter of ACO5, an ACC oxidase involved in ethylene biosynthesis. Mediates waterlogging-induced hyponastic leaf movement, and cell expansion in abaxial cells of the basal petiole region, by directly regulating the expression of ACO5. Required for normal seed development and morphology. This is NAC transcription factor 47 from Arabidopsis thaliana (Mouse-ear cress).